Reading from the N-terminus, the 1351-residue chain is ABC transporter C family member 6 (1351 aa).

The 286-residue stretch at 112–397 (NKYALVSNLF…LPYDIFKAIG (286 aa)) folds into the ABC transmembrane type-1 1 domain. 3 helical membrane passes run 120 to 140 (LFII…INYI), 149 to 169 (SILK…GQSI), and 248 to 268 (LLCY…VIAL). The region spanning 474–700 (NQDESINKKE…GIDFKSILKT (227 aa)) is the ABC transporter 1 domain. 510–517 (GVVGSGKT) serves as a coordination point for ATP. Positions 701–734 (KEIKKNVENETDSEELIKNEIEIENEIIDVNNAI) form a coiled coil. 6 consecutive transmembrane segments (helical) span residues 771-791 (GSSG…QAIF), 815-835 (IGYY…RILL), 904-924 (LISI…LSIA), 977-999 (MFDN…RWVS), 1002-1022 (LEVM…LFIS), and 1025-1045 (GLAA…SWGI). The ABC transmembrane type-1 2 domain occupies 777-1060 (LFITISLFFV…LEVKMNSFQR (284 aa)). The 236-residue stretch at 1101 to 1336 (IEFKNVEIKY…PNSKFNKLIK (236 aa)) folds into the ABC transporter 2 domain. Position 1135-1142 (1135-1142 (GRTGAGKT)) interacts with ATP.

This sequence belongs to the ABC transporter superfamily. ABCC family. Conjugate transporter (TC 3.A.1.208) subfamily.

Its subcellular location is the membrane. This Dictyostelium discoideum (Social amoeba) protein is ABC transporter C family member 6 (abcC6).